The primary structure comprises 362 residues: Very-long-chain (3R)-3-hydroxyacyl-CoA dehydratase 3 (362 aa).

At Met-1 the chain carries N-acetylmethionine. The Cytoplasmic portion of the chain corresponds to Met-1 to Tyr-149. Positions Val-5–Thr-94 constitute a CS domain. Thr-7 bears the Phosphothreonine mark. Positions Leu-111–Glu-136 form a coiled coil. Residues Ser-114 and Ser-135 each carry the phosphoserine modification. A helical transmembrane segment spans residues Leu-150–Val-170. Over Arg-171–His-185 the chain is Lumenal. A helical transmembrane segment spans residues Thr-186–Ile-207. The Cytoplasmic segment spans residues Gly-208–Ser-217. A helical transmembrane segment spans residues Leu-218–Met-235. Residues Glu-236–Lys-241 are Lumenal-facing. A helical transmembrane segment spans residues Ala-242–Ile-256. The Cytoplasmic segment spans residues Phe-257–Tyr-279. The helical transmembrane segment at Thr-280–Ile-298 threads the bilayer. Catalysis depends on residues Tyr-286 and Glu-293. Topologically, residues Gln-299–Val-322 are lumenal. The helical transmembrane segment at Arg-323–Phe-343 threads the bilayer. The Cytoplasmic portion of the chain corresponds to Arg-344–His-362.

This sequence belongs to the very long-chain fatty acids dehydratase HACD family. May interact with enzymes of the ELO family (including ELOVL1); with those enzymes that mediate condensation, the first of the four steps of the reaction cycle responsible for fatty acids elongation, may be part of a larger fatty acids elongase complex. Interacts with RAC1. Associates with internalized insulin receptor/INSR complexes on Golgi/endosomal membranes; HACD3/PTPLAD1 together with ATIC and PRKAA2/AMPK2 is proposed to be part of a signaling network regulating INSR autophosphorylation and endocytosis. As to expression, highly expressed in testis, kidney, brain, liver and weakly in skeletal muscle, spleen and heart. No expression detected in leukocytes.

It localises to the endoplasmic reticulum membrane. The catalysed reaction is a very-long-chain (3R)-3-hydroxyacyl-CoA = a very-long-chain (2E)-enoyl-CoA + H2O. It carries out the reaction (3R)-hydroxyhexadecanoyl-CoA = (2E)-hexadecenoyl-CoA + H2O. Its pathway is lipid metabolism; fatty acid biosynthesis. Catalyzes the third of the four reactions of the long-chain fatty acids elongation cycle. This endoplasmic reticulum-bound enzymatic process, allows the addition of two carbons to the chain of long- and very long-chain fatty acids/VLCFAs per cycle. This enzyme catalyzes the dehydration of the 3-hydroxyacyl-CoA intermediate into trans-2,3-enoyl-CoA, within each cycle of fatty acid elongation. Thereby, it participates in the production of VLCFAs of different chain lengths that are involved in multiple biological processes as precursors of membrane lipids and lipid mediators. May be involved in Rac1-signaling pathways leading to the modulation of gene expression. Promotes insulin receptor/INSR autophosphorylation and is involved in INSR internalization. This Homo sapiens (Human) protein is Very-long-chain (3R)-3-hydroxyacyl-CoA dehydratase 3.